Consider the following 678-residue polypeptide: Translation initiation factor eIF2B subunit epsilon (678 aa).

Thr172 bears the Phosphothreonine mark. Residues 467-489 (STNELHLSDSESSETSSSSEEDM) are disordered. Position 500 is a phosphoserine (Ser500). Position 503 is a phosphothreonine (Thr503). Residue Ser506 is modified to Phosphoserine. Residues 508 to 674 (DFDEGDFNKE…NTAESESESE (167 aa)) enclose the W2 domain.

This sequence belongs to the eIF-2B gamma/epsilon subunits family. In terms of assembly, component of the translation initiation factor 2B (eIF2B) complex which is a heterodecamer of two sets of five different subunits: alpha, beta, gamma, delta and epsilon. Subunits alpha, beta and delta comprise a regulatory subcomplex and subunits epsilon and gamma comprise a catalytic subcomplex. Within the complex, the hexameric regulatory complex resides at the center, with the two heterodimeric catalytic subcomplexes bound on opposite sides.

The protein localises to the cytoplasm. It localises to the cytosol. Acts as a component of the translation initiation factor 2B (eIF2B) complex, which catalyzes the exchange of GDP for GTP on the eukaryotic initiation factor 2 (eIF2) complex gamma subunit. Its guanine nucleotide exchange factor activity is repressed when bound to eIF2 complex phosphorylated on the alpha subunit, thereby limiting the amount of methionyl-initiator methionine tRNA available to the ribosome and consequently global translation is repressed. This is Translation initiation factor eIF2B subunit epsilon (tif225) from Schizosaccharomyces pombe (strain 972 / ATCC 24843) (Fission yeast).